Here is a 284-residue protein sequence, read N- to C-terminus: Circadian clock oscillator protein KaiA (284 aa).

The interval 1–135 (MLSQIAICIW…LRLAPVETMA (135 aa)) is psR domain, binds oxidized quinones. Residues 1-164 (MLSQIAICIW…DLAQRLQERL (164 aa)) form the KaiA N-terminal domain. A flexible linker region spans residues 165–173 (GYLGVYYKR). Residues 174–282 (DPDRFLRNLP…CEMYRRSIPR (109 aa)) enclose the KaiA C-terminal domain.

The protein belongs to the KaiA family. Homodimer. The KaiABC complex composition changes during the circadian cycle to control KaiC phosphorylation. Complexes KaiC(6), KaiA(2-4):KaiC(6), KaiB(6):KaiC(6) and KaiC(6):KaiB(6):KaiA(12) are among the most important forms, many form cooperatively. The KaiA:KaiB complex is only found at 20-24 hours in the circadian cycle (subjective night). Binds to the C-terminal A-loop of KaiC via a coiled-coil structure. KaiA and CikA compete for binding to KaiB(fs). CikA copurifies with this protein in the clock complex. Interacts with LdpA.

Binding of oxidized quinones (produced as darkness falls) prevents KaiA from stimulating KaiC autophosphorylation. Its function is as follows. Key component of the KaiABC oscillator complex, which constitutes the main circadian regulator in cyanobacteria. Complex composition changes during the circadian cycle to control KaiC phosphorylation. KaiA stimulates KaiC autophosphorylation, while KaiB sequesters KaiA, leading to KaiC autodephosphorylation. KaiA binding to the KaiC CII domain during the subjective day yields KaiA(2-4):KaiC(6) complexes which stimulate KaiC autophosphorylation. A KaiA dimer is sufficient to enhance KaiC hexamer phosphorylation. Phospho-Ser-431 KaiC accumulation triggers binding of KaiB during the subjective night to form the KaiB(6):KaiC(6) complex, leading to changes in the output regulators CikA and SasA. KaiB(6):KaiC(6) formation exposes a site for KaiA binding on KaiB that sequesters KaiA from KaiC's CII domain, making the KaiC(6):KaiB(6):KaiA(12) complex resulting in KaiC autodephosphorylation. Complete dephosphorylation of KaiC leads to dissociation of KaiA(2):KaiB(1), completing 1 cycle of the Kai oscillator. Circadian oscillations can be generated in vitro by incubating KaiA, KaiB and KaiC with 1 mM ATP. The cycle is self-sustainable for at least 3 cycles and resistant to temperature changes. A very robust clock is reconstituted with KaiA, KaiB, KaiC, SasA, CikA and RpaA; output is measured by transcription from an appropriate reporter. In terms of biological role, kaiA binds oxidized quinones via its N-terminal PsR domain and is able to sense redox signals directly; quinone analog DBMIB (2,5-dibromo-3-methyl-6-isopropyl-p-benzoquinone) blocks KaiA stimulation of KaiC phosphorylation. The homodimer binds up to 8 quinones in the crystal structure, 3 in the PsR domain and 1 via the C-terminal helical bundle. Binding of oxidized quinone to the KaiA C-terminal domain reduces the phosphorylation of KaiC slightly; quinones may interact in a complex manner with KaiA to mediate clock input. The polypeptide is Circadian clock oscillator protein KaiA (Synechococcus elongatus (strain ATCC 33912 / PCC 7942 / FACHB-805) (Anacystis nidulans R2)).